Consider the following 306-residue polypeptide: Ribosomal protein L11 methyltransferase (306 aa).

Positions 152, 179, 201, and 243 each coordinate S-adenosyl-L-methionine.

The protein belongs to the methyltransferase superfamily. PrmA family.

It is found in the cytoplasm. The catalysed reaction is L-lysyl-[protein] + 3 S-adenosyl-L-methionine = N(6),N(6),N(6)-trimethyl-L-lysyl-[protein] + 3 S-adenosyl-L-homocysteine + 3 H(+). Its function is as follows. Methylates ribosomal protein L11. The chain is Ribosomal protein L11 methyltransferase from Geobacter sp. (strain M21).